A 777-amino-acid polypeptide reads, in one-letter code: CRISPR system single-strand-specific deoxyribonuclease Cas10/Csm1 (subtype III-A) (777 aa).

The HD domain maps to 1-106 (MEIDELTALG…VYEADNLASG (106 aa)). Residues 513–660 (RRLGVMKGDV…GRNRVFVVGR (148 aa)) enclose the GGDEF domain.

The protein belongs to the CRISPR-associated Cas10/Csm1 family. In terms of assembly, probably part of the Csm effector complex, that includes Cas10, Csm2, Csm3, Csm4, Csm5 and mature crRNA. Will form a homodimer in solution, interacts with Csm4, which is a tighter, better association than the homodimeric Cas10 and uses the same interface for interaction. The cofactor is a divalent metal cation.

With respect to regulation, ssDNase activity is inhibited by EDTA. Its function is as follows. CRISPR (clustered regularly interspaced short palindromic repeat) is an adaptive immune system that provides protection against mobile genetic elements (viruses, transposable elements and conjugative plasmids). CRISPR clusters contain spacers, sequences complementary to antecedent mobile elements, and target invading nucleic acids. CRISPR clusters are transcribed and processed into CRISPR RNA (crRNA). The type III-A Csm effector complex binds crRNA and acts as a crRNA-guided RNase, DNase and cyclic oligoadenylate synthase; binding of target RNA cognate to the crRNA is required for all activities. In terms of biological role, a single-strand deoxyribonuclease (ssDNase) which digests linear and circular ssDNA; has 5'-3' and 3'-5' exonuclease activity as well as a less efficient endonuclease activity. Has a minimal size requirement; 100 nucleotide ssDNA (nt) is more efficiently digested than 50 or 25 nt ssDNA, while 14 nt ssDNA is not cleaved at all. It has no activity on dsDNA or ssRNA. SsDNase activity is stimulated in the ternary Csm effector complex; binding of cognate target RNA activates the ssDNase, as the target RNA is degraded ssDNA activity decreases. Functionally, when associated with the ternary Csm effector complex (the crRNA, Cas proteins and a cognate target ssRNA) synthesizes cyclic oligoadenylates (cOA) from ATP. cOAs are second messengers that stimulate the ssRNase activity of Csm6, inducing an antiviral state important for defense against invading nucleic acids. This chain is CRISPR system single-strand-specific deoxyribonuclease Cas10/Csm1 (subtype III-A), found in Thermococcus onnurineus (strain NA1).